The sequence spans 96 residues: MLRLDLQFFASKKGVGSTKNGRDSQSKRLGAKRADGQMVTGGSILYRQRGTKIYPGVNVGRGGDDTLYAKVDGVVRFERLGRDRKQVSVYPVAQEA.

A propeptide spanning residues M1–F9 is cleaved from the precursor. Residues G14 to D35 are disordered.

Belongs to the bacterial ribosomal protein bL27 family. The N-terminus is cleaved by ribosomal processing cysteine protease Prp.

The chain is Large ribosomal subunit protein bL27 from Bacillus cytotoxicus (strain DSM 22905 / CIP 110041 / 391-98 / NVH 391-98).